The primary structure comprises 350 residues: Glycogenin-1 (350 aa).

N-acetylthreonine is present on T2. UDP contacts are provided by L9, T11, N12, and Y15. UDP-alpha-D-glucose is bound by residues L9, T11, N12, and Y15. S44 is subject to Phosphoserine. R77 is a binding site for UDP. UDP-alpha-D-glucose is bound by residues R77, K86, D102, A103, D104, N133, S134, D160, D163, and Q164. Positions 102, 103, and 104 each coordinate UDP. A Mn(2+)-binding site is contributed by D102. D104 is a Mn(2+) binding site. The O-linked (Glc...) tyrosine glycan is linked to Y195. Positions 212, 215, and 218 each coordinate UDP. H212 is a binding site for Mn(2+). Residues G215 and K218 each contribute to the UDP-alpha-D-glucose site. The interaction with GYS1 stretch occupies residues 301-333 (SHLSLGEIPAMAQPFVSSEERKERWEQGQADYM).

The protein belongs to the glycosyltransferase 8 family. Glycogenin subfamily. In terms of assembly, part of the GYS1-GYG1 complex, a heterooctamer composed of a tetramer of GYS1 and 2 dimers of GYG1, where each GYS1 protomer binds to one GYG1 subunit (via GYG1 C-terminus); the GYS1 tetramer may dissociate from GYG1 dimers to continue glycogen polymerization on its own. May also form a heterooctamer complex with GYS2 (via GYG1 C-terminus). The cofactor is Mn(2+). In terms of processing, self-glycosylated by the transfer of glucose residues from UDP-glucose to itself, forming an alpha-1,4-glycan of around 10 residues attached to Tyr-195. Phosphorylated. As to expression, highly expressed in skeletal muscle and heart, with lower levels in brain, lung, kidney and pancreas.

The protein localises to the cytoplasm. It is found in the nucleus. It carries out the reaction L-tyrosyl-[glycogenin] + UDP-alpha-D-glucose = alpha-D-glucosyl-L-tyrosyl-[glycogenin] + UDP + H(+). The enzyme catalyses [1,4-alpha-D-glucosyl](n)-L-tyrosyl-[glycogenin] + UDP-alpha-D-glucose = [1,4-alpha-D-glucosyl](n+1)-L-tyrosyl-[glycogenin] + UDP + H(+). Its pathway is glycan biosynthesis; glycogen biosynthesis. With respect to regulation, inhibited by palladium ions. Glycogenin participates in the glycogen biosynthetic process along with glycogen synthase and glycogen branching enzyme. It catalyzes the formation of a short alpha (1,4)-glucosyl chain covalently attached via a glucose 1-O-tyrosyl linkage to internal tyrosine residues and these chains act as primers for the elongation reaction catalyzed by glycogen synthase. The protein is Glycogenin-1 of Homo sapiens (Human).